A 384-amino-acid chain; its full sequence is Probable L-aspartate decarboxylase (384 aa).

Lysine 233 bears the N6-(pyridoxal phosphate)lysine mark.

It belongs to the group II decarboxylase family. MfnA subfamily. Pyridoxal 5'-phosphate is required as a cofactor.

It catalyses the reaction L-aspartate + H(+) = beta-alanine + CO2. The protein operates within cofactor biosynthesis; coenzyme A biosynthesis. Catalyzes the decarboxylation of L-aspartate to produce beta-alanine. The sequence is that of Probable L-aspartate decarboxylase from Pyrococcus abyssi (strain GE5 / Orsay).